The following is a 772-amino-acid chain: 1,4-alpha-glucan branching enzyme GlgB (772 aa).

Aspartate 431 acts as the Nucleophile in catalysis. Glutamate 484 acts as the Proton donor in catalysis.

Belongs to the glycosyl hydrolase 13 family. GlgB subfamily. Monomer.

The catalysed reaction is Transfers a segment of a (1-&gt;4)-alpha-D-glucan chain to a primary hydroxy group in a similar glucan chain.. It participates in glycan biosynthesis; glycogen biosynthesis. Its function is as follows. Catalyzes the formation of the alpha-1,6-glucosidic linkages in glycogen by scission of a 1,4-alpha-linked oligosaccharide from growing alpha-1,4-glucan chains and the subsequent attachment of the oligosaccharide to the alpha-1,6 position. The chain is 1,4-alpha-glucan branching enzyme GlgB from Synechococcus sp. (strain RCC307).